A 177-amino-acid polypeptide reads, in one-letter code: dCTP deaminase (177 aa).

DCTP is bound by residues 100–105 and aspartate 116; that span reads RSSIAR. Glutamate 126 serves as the catalytic Proton donor/acceptor. Positions 159 and 166 each coordinate dCTP.

Belongs to the dCTP deaminase family. As to quaternary structure, homotrimer.

The enzyme catalyses dCTP + H2O + H(+) = dUTP + NH4(+). The protein operates within pyrimidine metabolism; dUMP biosynthesis; dUMP from dCTP (dUTP route): step 1/2. Functionally, catalyzes the deamination of dCTP to dUTP. The chain is dCTP deaminase from Korarchaeum cryptofilum (strain OPF8).